A 344-amino-acid polypeptide reads, in one-letter code: Phosphate acyltransferase (344 aa).

It belongs to the PlsX family. Homodimer. Probably interacts with PlsY.

Its subcellular location is the cytoplasm. The enzyme catalyses a fatty acyl-[ACP] + phosphate = an acyl phosphate + holo-[ACP]. It functions in the pathway lipid metabolism; phospholipid metabolism. In terms of biological role, catalyzes the reversible formation of acyl-phosphate (acyl-PO(4)) from acyl-[acyl-carrier-protein] (acyl-ACP). This enzyme utilizes acyl-ACP as fatty acyl donor, but not acyl-CoA. In Yersinia enterocolitica serotype O:8 / biotype 1B (strain NCTC 13174 / 8081), this protein is Phosphate acyltransferase.